A 276-amino-acid chain; its full sequence is Hydroxycinnamoyl-CoA hydratase-lyase (276 aa).

Residues K29, A68, M70, and L72 each contribute to the acetyl-CoA site. Vanillin is bound at residue Y75. Acetyl-CoA contacts are provided by G120, S142, and W146. Positions 151 and 239 each coordinate vanillin.

Belongs to the enoyl-CoA hydratase/isomerase family. In terms of assembly, homohexamer; dimer of trimers.

It catalyses the reaction (E)-feruloyl-CoA + H2O = vanillin + acetyl-CoA. It carries out the reaction (E)-caffeoyl-CoA + H2O = 3,4-dihydroxybenzaldehyde + acetyl-CoA. The enzyme catalyses (E)-4-coumaroyl-CoA + H2O = 4-hydroxybenzaldehyde + acetyl-CoA. The catalysed reaction is (E)-feruloyl-CoA + H2O = 3-hydroxy-3-(4-hydroxy-3-methoxyphenyl)propanoyl-CoA. It catalyses the reaction 3-hydroxy-3-(4-hydroxy-3-methoxyphenyl)propanoyl-CoA = vanillin + acetyl-CoA. It carries out the reaction (E)-caffeoyl-CoA + H2O = 3-hydroxy-3-(3,4-dihydroxyphenyl)propanoyl-CoA. The enzyme catalyses 3-hydroxy-3-(3,4-dihydroxyphenyl)propanoyl-CoA = 3,4-dihydroxybenzaldehyde + acetyl-CoA. The catalysed reaction is (E)-4-coumaroyl-CoA + H2O = 3-hydroxy-3-(4-hydroxyphenyl)propanoyl-CoA. It catalyses the reaction 3-hydroxy-3-(4-hydroxyphenyl)propanoyl-CoA = 4-hydroxybenzaldehyde + acetyl-CoA. Functionally, catalyzes the hydration of the acyl-CoA thioester of ferulic acid and the subsequent retro-aldol cleavage of the hydrated intermediate to yield vanillin (4-hydroxy-3-methoxy-benzaldehyde). The enzyme is also active with caffeoyl-CoA and 4-coumaroyl-CoA producing 3,4-dihydroxybenzaldehyde and 4-hydroxybenzaldehyde, respectively. The polypeptide is Hydroxycinnamoyl-CoA hydratase-lyase (Pseudomonas fluorescens).